The primary structure comprises 171 residues: MEIGQYQPNLEGDGLRIGIVQSRFNEPVCNGLADACVEELERLGVSGEDVLLVSVPGALEIPLALQKLAESGQFDALIALGAVIRGETYHFELVSNESGAGITRIGLDFNLPIANAVLTTENDEQAVARMTEKGRDAARVAVEMANLTMALDQLGDDEDEEEDEEDEEERA.

Residues Phe24, 58-60 (ALE), and 82-84 (AVI) each bind 5-amino-6-(D-ribitylamino)uracil. (2S)-2-hydroxy-3-oxobutyl phosphate is bound at residue 87–88 (ET). His90 functions as the Proton donor in the catalytic mechanism. Asn115 contributes to the 5-amino-6-(D-ribitylamino)uracil binding site. Arg129 is a (2S)-2-hydroxy-3-oxobutyl phosphate binding site. Residues 150–171 (ALDQLGDDEDEEEDEEDEEERA) form a disordered region. The span at 154–171 (LGDDEDEEEDEEDEEERA) shows a compositional bias: acidic residues.

Belongs to the DMRL synthase family.

The enzyme catalyses (2S)-2-hydroxy-3-oxobutyl phosphate + 5-amino-6-(D-ribitylamino)uracil = 6,7-dimethyl-8-(1-D-ribityl)lumazine + phosphate + 2 H2O + H(+). It functions in the pathway cofactor biosynthesis; riboflavin biosynthesis; riboflavin from 2-hydroxy-3-oxobutyl phosphate and 5-amino-6-(D-ribitylamino)uracil: step 1/2. Functionally, catalyzes the formation of 6,7-dimethyl-8-ribityllumazine by condensation of 5-amino-6-(D-ribitylamino)uracil with 3,4-dihydroxy-2-butanone 4-phosphate. This is the penultimate step in the biosynthesis of riboflavin. This chain is 6,7-dimethyl-8-ribityllumazine synthase, found in Burkholderia ambifaria (strain ATCC BAA-244 / DSM 16087 / CCUG 44356 / LMG 19182 / AMMD) (Burkholderia cepacia (strain AMMD)).